The sequence spans 625 residues: Sphingomyelin phosphodiesterase (625 aa).

Residues 1–20 are disordered; the sequence is MPRHGVSPGQGLPRSGREQA. The first 40 residues, 1 to 40, serve as a signal peptide directing secretion; the sequence is MPRHGVSPGQGLPRSGREQASDRSLGAPCLRLLWLGLALA. The Saposin B-type domain occupies 81-165; the sequence is WNLTCPTCKG…LLGSSCGHWD (85 aa). Residue asparagine 82 is glycosylated (N-linked (GlcNAc...) asparagine). Disulfide bonds link cysteine 85–cysteine 161, cysteine 88–cysteine 153, and cysteine 116–cysteine 127. An N-linked (GlcNAc...) asparagine glycan is attached at asparagine 171. The Zn(2+) site is built by aspartate 202 and histidine 204. 2 cysteine pairs are disulfide-bonded: cysteine 217–cysteine 222 and cysteine 223–cysteine 246. Zn(2+) is bound by residues aspartate 274 and asparagine 314. Residues asparagine 331 and asparagine 391 are each glycosylated (N-linked (GlcNAc...) asparagine). Cysteines 381 and 427 form a disulfide. Zn(2+) is bound by residues histidine 421, histidine 453, and histidine 455. N-linked (GlcNAc...) asparagine glycosylation occurs at asparagine 499. Phosphoserine is present on serine 504. A glycan (N-linked (GlcNAc...) asparagine) is linked at asparagine 516. 2 disulfides stabilise this stretch: cysteine 580–cysteine 584 and cysteine 590–cysteine 603.

The protein belongs to the acid sphingomyelinase family. Monomer. Interacts with SORT1; the interaction is required for SMPD1 targeting to lysosomes. Zn(2+) serves as cofactor. Proteolytically processed. Mature lysosomal form arises from C-terminal proteolytic processing of pro-sphingomyelin phosphodiesterase. Post-translationally, both lysosomal and secreted forms are glycosylated but they show a differential pattern of glycosylation. In terms of processing, phosphorylated at Ser-504 by PRKCD upon stress stimuli. Phosphorylation is required for secretion. This form is generated following cleavage by CASP7 in the extracellular milieu. It shows increased activity.

It localises to the lysosome. Its subcellular location is the lipid droplet. It is found in the secreted. The protein resides in the extracellular space. It catalyses the reaction a sphingomyelin + H2O = phosphocholine + an N-acylsphing-4-enine + H(+). The catalysed reaction is N-(octadecanoyl)-sphing-4-enine-1-phosphocholine + H2O = N-octadecanoylsphing-4-enine + phosphocholine + H(+). The enzyme catalyses a 1,2-diacyl-sn-glycero-3-phosphocholine + H2O = phosphocholine + a 1,2-diacyl-sn-glycerol + H(+). It carries out the reaction 1,2-dihexadecanoyl-sn-glycero-3-phosphocholine + H2O = 1,2-dihexadecanoyl-sn-glycerol + phosphocholine + H(+). Hydrolysis of liposomal sphingomyelin is stimulated by incorporation of diacylglycerol (DAG), ceramide and free fatty acids into the liposomal membranes. Phosphatidylcholine hydrolysis is inhibited by incorporation of cholesterol, ceramide, DAG, monoacylglycerol and fatty acids. Functionally, converts sphingomyelin to ceramide. Exists as two enzymatic forms that arise from alternative trafficking of a single protein precursor, one that is targeted to the endolysosomal compartment, whereas the other is released extracellularly. However, in response to various forms of stress, lysosomal exocytosis may represent a major source of the secretory form. In terms of biological role, in the lysosomes, converts sphingomyelin to ceramide. Plays an important role in the export of cholesterol from the intraendolysosomal membranes. Also has phospholipase C activities toward 1,2-diacylglycerolphosphocholine and 1,2-diacylglycerolphosphoglycerol. Modulates stress-induced apoptosis through the production of ceramide. Its function is as follows. When secreted, modulates cell signaling with its ability to reorganize the plasma membrane by converting sphingomyelin to ceramide. Secreted form is increased in response to stress and inflammatory mediators such as IL1B, IFNG or TNF as well as upon infection with bacteria and viruses. Produces the release of ceramide in the outer leaflet of the plasma membrane playing a central role in host defense. Ceramide reorganizes these rafts into larger signaling platforms that are required to internalize bacteria, induce apoptosis and regulate the cytokine response in infected cells. In wounded cells, the lysosomal form is released extracellularly in the presence of Ca(2+) and promotes endocytosis and plasma membrane repair. This form is generated following cleavage by CASP7 in the extracellular milieu in response to bacterial infection. It shows increased ability to convert sphingomyelin to ceramide and promotes plasma membrane repair. Plasma membrane repair by ceramide counteracts the action of gasdermin-D (GSDMD) perforin (PRF1) pores that are formed in response to bacterial infection. This is Sphingomyelin phosphodiesterase (SMPD1) from Bos taurus (Bovine).